A 618-amino-acid polypeptide reads, in one-letter code: Chaperone protein HtpG (618 aa).

The segment at 1 to 340 (MATKHQFQTE…SEDLPLNVSR (340 aa)) is a; substrate-binding. Residues 341–545 (EILQQNKILA…KEDNNPMMAN (205 aa)) are b. The segment at 546–618 (LMAQMGQKVP…ELNSLLLQSL (73 aa)) is c.

It belongs to the heat shock protein 90 family. As to quaternary structure, homodimer.

The protein resides in the cytoplasm. Molecular chaperone. Has ATPase activity. This Helicobacter hepaticus (strain ATCC 51449 / 3B1) protein is Chaperone protein HtpG.